The primary structure comprises 317 residues: Aspartate carbamoyltransferase catalytic subunit (317 aa).

Carbamoyl phosphate-binding residues include Arg-66 and Thr-67. Residue Lys-94 participates in L-aspartate binding. 3 residues coordinate carbamoyl phosphate: Arg-116, His-144, and Gln-147. L-aspartate-binding residues include Arg-177 and Arg-231. Gly-272 and Pro-273 together coordinate carbamoyl phosphate.

The protein belongs to the aspartate/ornithine carbamoyltransferase superfamily. ATCase family. As to quaternary structure, heterododecamer (2C3:3R2) of six catalytic PyrB chains organized as two trimers (C3), and six regulatory PyrI chains organized as three dimers (R2).

The enzyme catalyses carbamoyl phosphate + L-aspartate = N-carbamoyl-L-aspartate + phosphate + H(+). It functions in the pathway pyrimidine metabolism; UMP biosynthesis via de novo pathway; (S)-dihydroorotate from bicarbonate: step 2/3. Catalyzes the condensation of carbamoyl phosphate and aspartate to form carbamoyl aspartate and inorganic phosphate, the committed step in the de novo pyrimidine nucleotide biosynthesis pathway. This is Aspartate carbamoyltransferase catalytic subunit from Rhodopseudomonas palustris (strain BisB5).